Reading from the N-terminus, the 436-residue chain is GTPase Der (436 aa).

2 EngA-type G domains span residues 4–167 and 175–351; these read PTVA…PVEE and IRFS…ESQN. GTP contacts are provided by residues 10–17, 57–61, 119–122, 181–188, 229–233, and 294–297; these read GRPNVGKS, DTGGI, NKVD, DTAGM, and NKWD. Positions 352-436 constitute a KH-like domain; that stretch reads KRIPSAVLND…PIHLIARKRK (85 aa).

The protein belongs to the TRAFAC class TrmE-Era-EngA-EngB-Septin-like GTPase superfamily. EngA (Der) GTPase family. Associates with the 50S ribosomal subunit.

In terms of biological role, GTPase that plays an essential role in the late steps of ribosome biogenesis. This chain is GTPase Der, found in Streptococcus pyogenes serotype M5 (strain Manfredo).